The chain runs to 458 residues: tRNA modification GTPase MnmE (458 aa).

(6S)-5-formyl-5,6,7,8-tetrahydrofolate is bound by residues arginine 22, glutamate 84, and arginine 123. The region spanning 220-379 (GIATAIIGRP…LETAIADLFF (160 aa)) is the TrmE-type G domain. Asparagine 230 lines the K(+) pocket. Residues 230 to 235 (NVGKSS), 249 to 255 (TDIAGTT), and 274 to 277 (DTAG) each bind GTP. Serine 234 provides a ligand contact to Mg(2+). 3 residues coordinate K(+): threonine 249, isoleucine 251, and threonine 254. Threonine 255 is a binding site for Mg(2+). Lysine 458 contributes to the (6S)-5-formyl-5,6,7,8-tetrahydrofolate binding site.

The protein belongs to the TRAFAC class TrmE-Era-EngA-EngB-Septin-like GTPase superfamily. TrmE GTPase family. Homodimer. Heterotetramer of two MnmE and two MnmG subunits. The cofactor is K(+).

The protein resides in the cytoplasm. Exhibits a very high intrinsic GTPase hydrolysis rate. Involved in the addition of a carboxymethylaminomethyl (cmnm) group at the wobble position (U34) of certain tRNAs, forming tRNA-cmnm(5)s(2)U34. In Bacillus cereus (strain ATCC 10987 / NRS 248), this protein is tRNA modification GTPase MnmE.